The following is a 680-amino-acid chain: Methionine--tRNA ligase (680 aa).

Positions 15 to 25 (PYANGPVHIGH) match the 'HIGH' region motif. Residues cysteine 147, cysteine 150, cysteine 160, and cysteine 163 each coordinate Zn(2+). Residues 332–336 (KISTS) carry the 'KMSKS' region motif. Threonine 335 serves as a coordination point for ATP. Residues 579–680 (DFLKLDIRVG…AEVAAGSQVK (102 aa)) form the tRNA-binding domain.

Belongs to the class-I aminoacyl-tRNA synthetase family. MetG type 1 subfamily. As to quaternary structure, homodimer. Zn(2+) is required as a cofactor.

It localises to the cytoplasm. It carries out the reaction tRNA(Met) + L-methionine + ATP = L-methionyl-tRNA(Met) + AMP + diphosphate. In terms of biological role, is required not only for elongation of protein synthesis but also for the initiation of all mRNA translation through initiator tRNA(fMet) aminoacylation. This is Methionine--tRNA ligase from Porphyromonas gingivalis (strain ATCC BAA-308 / W83).